Here is a 171-residue protein sequence, read N- to C-terminus: Large ribosomal subunit protein uL10 (171 aa).

It belongs to the universal ribosomal protein uL10 family. Part of the ribosomal stalk of the 50S ribosomal subunit. The N-terminus interacts with L11 and the large rRNA to form the base of the stalk. The C-terminus forms an elongated spine to which L12 dimers bind in a sequential fashion forming a multimeric L10(L12)X complex.

Forms part of the ribosomal stalk, playing a central role in the interaction of the ribosome with GTP-bound translation factors. The sequence is that of Large ribosomal subunit protein uL10 from Phenylobacterium zucineum (strain HLK1).